A 439-amino-acid polypeptide reads, in one-letter code: NAD-dependent malic enzyme 1 (439 aa).

The region spanning 9–84 is the ACT domain; sequence TLMIETPSVP…GIRLHTVSDE (76 aa). Catalysis depends on Y112, which acts as the Proton donor. The active-site Proton acceptor is K167. A divalent metal cation-binding residues include E209, D210, and D235. NAD(+) contacts are provided by residues 268–271, N347, and N373; that span reads LGAA.

The protein belongs to the malic enzymes family. Mg(2+) is required as a cofactor. The cofactor is Mn(2+).

The catalysed reaction is (S)-malate + NAD(+) = pyruvate + CO2 + NADH. The enzyme catalyses oxaloacetate + H(+) = pyruvate + CO2. Functionally, catalyzes the decarboxylation of malate to pyruvate. Is specific for NAD, cannot use NADP. Can also catalyze the decarboxylation of oxaloacetate. Involved in keeping the ATP levels high. In Bacillus subtilis (strain 168), this protein is NAD-dependent malic enzyme 1.